A 90-amino-acid chain; its full sequence is Probable Fe(2+)-trafficking protein (90 aa).

Belongs to the Fe(2+)-trafficking protein family.

Could be a mediator in iron transactions between iron acquisition and iron-requiring processes, such as synthesis and/or repair of Fe-S clusters in biosynthetic enzymes. The polypeptide is Probable Fe(2+)-trafficking protein (Stutzerimonas stutzeri (strain A1501) (Pseudomonas stutzeri)).